Here is a 182-residue protein sequence, read N- to C-terminus: Ribosome maturation factor RimM (182 aa).

The PRC barrel domain occupies 103 to 182 (EDDYYWKDLM…RVEVDWDPGF (80 aa)).

Belongs to the RimM family. As to quaternary structure, binds ribosomal protein uS19.

Its subcellular location is the cytoplasm. Its function is as follows. An accessory protein needed during the final step in the assembly of 30S ribosomal subunit, possibly for assembly of the head region. Essential for efficient processing of 16S rRNA. May be needed both before and after RbfA during the maturation of 16S rRNA. It has affinity for free ribosomal 30S subunits but not for 70S ribosomes. In Yersinia enterocolitica serotype O:8 / biotype 1B (strain NCTC 13174 / 8081), this protein is Ribosome maturation factor RimM.